A 465-amino-acid chain; its full sequence is UDP-N-acetylmuramate--L-alanine ligase (465 aa).

112–118 (GTHGKTT) serves as a coordination point for ATP.

It belongs to the MurCDEF family.

It is found in the cytoplasm. The catalysed reaction is UDP-N-acetyl-alpha-D-muramate + L-alanine + ATP = UDP-N-acetyl-alpha-D-muramoyl-L-alanine + ADP + phosphate + H(+). Its pathway is cell wall biogenesis; peptidoglycan biosynthesis. Its function is as follows. Cell wall formation. This is UDP-N-acetylmuramate--L-alanine ligase from Burkholderia lata (strain ATCC 17760 / DSM 23089 / LMG 22485 / NCIMB 9086 / R18194 / 383).